The primary structure comprises 326 residues: Adenosine receptor A1 (326 aa).

Residues methionine 1 to alanine 10 lie on the Extracellular side of the membrane. A helical transmembrane segment spans residues alanine 11–alanine 33. Residues valine 34–cysteine 46 are Cytoplasmic-facing. Residues phenylalanine 47–isoleucine 69 traverse the membrane as a helical segment. The Extracellular segment spans residues asparagine 70–cysteine 80. Cysteines 80 and 169 form a disulfide. Residues leucine 81–alanine 102 traverse the membrane as a helical segment. The Cytoplasmic segment spans residues valine 103–arginine 123. The chain crosses the membrane as a helical span at residues alanine 124 to tryptophan 146. At asparagine 147–serine 176 the chain is on the extracellular side. A glycan (N-linked (GlcNAc...) asparagine) is linked at asparagine 159. Residues methionine 177–leucine 201 traverse the membrane as a helical segment. Topologically, residues glutamate 202 to serine 235 are cytoplasmic. Residues leucine 236–phenylalanine 259 form a helical membrane-spanning segment. At cysteine 260–serine 267 the chain is on the extracellular side. The helical transmembrane segment at isoleucine 268–isoleucine 292 threads the bilayer. The Cytoplasmic segment spans residues glutamine 293–aspartate 326. Cysteine 309 carries S-palmitoyl cysteine lipidation.

This sequence belongs to the G-protein coupled receptor 1 family.

The protein resides in the cell membrane. Its function is as follows. Receptor for adenosine. The activity of this receptor is mediated by G proteins which inhibit adenylyl cyclase. This is Adenosine receptor A1 (ADORA1) from Homo sapiens (Human).